The primary structure comprises 102 residues: Small ribosomal subunit protein uS10 (102 aa).

Belongs to the universal ribosomal protein uS10 family. Part of the 30S ribosomal subunit.

Its function is as follows. Involved in the binding of tRNA to the ribosomes. The sequence is that of Small ribosomal subunit protein uS10 from Streptomyces griseus subsp. griseus (strain JCM 4626 / CBS 651.72 / NBRC 13350 / KCC S-0626 / ISP 5235).